The chain runs to 623 residues: Negative regulator of PDR1-mediated fluconazole resistance JJJ1 (623 aa).

A J domain is found at 4-70 (CYYDLLEVRS…QERAWYDSHK (67 aa)). Residues 363–387 (YDCFICKKSFKSEKQLENHIKTKLH) form a C2H2-type zinc finger. Disordered regions lie at residues 448–476 (QSSV…KLSN), 499–581 (GADN…NDAK), and 599–623 (SHIQ…KKNK). Positions 453–466 (DSEDFTDDNNDTED) are enriched in acidic residues. Residues 499-508 (GADNSETQNA) are compositionally biased toward polar residues. The span at 525-538 (ELTRILRELEESKT) shows a compositional bias: basic and acidic residues. Basic residues-rich tracts occupy residues 553–564 (KKKTKAKKKKNK) and 612–623 (KVKKGKRSKKNK).

The protein resides in the nucleus. Acts as a negative regulator of fluconazole resistance, primarily through down-regulation of the ABC transporter gene CDR1 via inactivation of the PDR1 transcriptional pathway. The protein is Negative regulator of PDR1-mediated fluconazole resistance JJJ1 of Candida glabrata (strain ATCC 2001 / BCRC 20586 / JCM 3761 / NBRC 0622 / NRRL Y-65 / CBS 138) (Yeast).